The primary structure comprises 206 residues: Small ribosomal subunit protein uS4 (206 aa).

The S4 RNA-binding domain maps to 96–157 (GRLDNVVYRM…KAKKQSRVRA (62 aa)).

It belongs to the universal ribosomal protein uS4 family. Part of the 30S ribosomal subunit. Contacts protein S5. The interaction surface between S4 and S5 is involved in control of translational fidelity.

Its function is as follows. One of the primary rRNA binding proteins, it binds directly to 16S rRNA where it nucleates assembly of the body of the 30S subunit. Functionally, with S5 and S12 plays an important role in translational accuracy. This chain is Small ribosomal subunit protein uS4, found in Sodalis glossinidius (strain morsitans).